A 571-amino-acid polypeptide reads, in one-letter code: Zinc metalloproteinase-disintegrin-like jararhagin (571 aa).

The propeptide occupies 1-150 (ATRPKGAVQP…KKASQLAFTA (150 aa)). Glu151 carries the pyrrolidone carboxylic acid (Glu) modification. The region spanning 159–355 (KYIEFFVVVD…HNPECIINEP (197 aa)) is the Peptidase M12B domain. Ca(2+) is bound by residues Glu162 and Asp246. Cystine bridges form between Cys270/Cys350, Cys310/Cys334, and Cys312/Cys317. His295 is a binding site for Zn(2+). Glu296 is a catalytic residue. The Zn(2+) site is built by His299 and His305. Residue Asn333 is glycosylated (N-linked (GlcNAc...) asparagine). 8 residues coordinate Ca(2+): Cys350, Asn353, Val365, Asn368, Leu370, Glu372, Glu375, and Asp378. A Disintegrin domain is found at 363–449 (PPVCGNELLE…ECPADVFHKN (87 aa)). 22 disulfide bridges follow: Cys366-Cys385, Cys366-Cys395, Cys377-Cys390, Cys377-Cys395, Cys379-Cys385, Cys389-Cys412, Cys403-Cys409, Cys408-Cys434, Cys421-Cys441, Cys428-Cys453, Cys428-Cys460, Cys453-Cys465, Cys460-Cys465, Cys472-Cys487, Cys472-Cys522, Cys487-Cys533, Cys500-Cys510, Cys510-Cys517, Cys517-Cys559, Cys522-Cys533, Cys553-Cys564, and Cys559-Cys564. The D/ECD-tripeptide signature appears at 427 to 429 (ECD). Residues Asp429, Pro430, Glu432, Asp444, and Val445 each coordinate Ca(2+).

The protein belongs to the venom metalloproteinase (M12B) family. P-III subfamily. P-IIIb sub-subfamily. Monomer (Jararhagin and Jararhagin-C) and dimer (Jaracetin). The cofactor is Zn(2+). In terms of processing, the N-terminus of Jararhagin is blocked. In terms of tissue distribution, expressed by the venom gland.

The protein localises to the secreted. It catalyses the reaction Cleavage of 10-His-|-Leu-11, 14-Ala-|-Leu-15, 16-Tyr-|-Leu-17 and 24-Phe-|-Phe-25 bonds in insulin B chain.. With respect to regulation, inhibited by EDTA, 1,10 phenanthroline and batimastat (a peptidomimetic MMP inhibitor). Snake venom zinc metalloproteinase-disintegrin-like jararhagin: causes hemorrhage. This is the result of the degradation of sub-endothelial matrix proteins leading to the disruption of the blood vessel endothelium, with accompanying disturbances in platelet function. It is able to degrade von Willebrand factor (vWF) and it hydrolyzes the alpha-chain of fibrinogen (FGA) while leaving the beta and gamma chains unaffected. It inhibits collagen-induced platelet aggregation through the binding to alpha-2/beta-1 integrin (ITGA2/ITGB1) (collagen receptor), and it cleaves the beta-1 subunit of the same integrin, inhibiting platelet interaction and ultimately causing impairment of signal transduction. It has inability to be affected by the plasma inhibitor alpha(2)-macroglobulin. In fibroblasts, it functions as a collagen-mimetic substrate and, in endothelial cells, it causes apoptosis and indirectly inhibits cell proliferation by release of angiostatin-like compounds. It induces a strong pro-inflammatory response characterized by intense leukocyte accumulation and release of cytokines at the site of the injection. Although hemorrhage and edema are a response to the direct effect of this toxin, jararhagin-induced inflammation and necrosis are dependent on macrophages and key pro-inflammatory cytokines or their receptors. It also possesses anti-tumorgenic properties. In terms of biological role, the monomeric form inhibits collagen- and ADP-induced platelet aggregation, but has no effect on glycoprotein Ib-IX-dependent (GP1BA/GP5/GP9) platelet agglutination. Locally activates the early events of an acute inflammatory response as leukocyte rolling and pro-inflammatory cytokine release. Its function is as follows. The dimeric form jaracetin may be a dimeric form of jararhagin-C. It binds to von Willebrand factor (VWF) and induces its interaction with GPIbalpha (GP1BA) (via the vWF A1 domain), resulting in platelet aggregation. Also binds the alpha-2 subunit of the alpha-2/beta-1 (ITGA2/ITGB1) integrin. It potently induces platelet aggregation in citrated platelet-rich plasma. This chain is Zinc metalloproteinase-disintegrin-like jararhagin, found in Bothrops jararaca (Jararaca).